The following is a 346-amino-acid chain: 3-isopropylmalate dehydrogenase (346 aa).

NAD(+) is bound at residue 76-87 (GPQWTDPNNRPE). Arg94, Arg104, Arg132, and Asp217 together coordinate substrate. Mg(2+)-binding residues include Asp217, Asp241, and Asp245. 275–287 (GSAPDIANQNLAN) provides a ligand contact to NAD(+).

It belongs to the isocitrate and isopropylmalate dehydrogenases family. LeuB type 1 subfamily. Homodimer. Requires Mg(2+) as cofactor. It depends on Mn(2+) as a cofactor.

The protein resides in the cytoplasm. It catalyses the reaction (2R,3S)-3-isopropylmalate + NAD(+) = 4-methyl-2-oxopentanoate + CO2 + NADH. Its pathway is amino-acid biosynthesis; L-leucine biosynthesis; L-leucine from 3-methyl-2-oxobutanoate: step 3/4. In terms of biological role, catalyzes the oxidation of 3-carboxy-2-hydroxy-4-methylpentanoate (3-isopropylmalate) to 3-carboxy-4-methyl-2-oxopentanoate. The product decarboxylates to 4-methyl-2 oxopentanoate. This Staphylococcus haemolyticus (strain JCSC1435) protein is 3-isopropylmalate dehydrogenase.